The chain runs to 504 residues: Lysine--tRNA ligase (504 aa).

Mg(2+) contacts are provided by Glu-411 and Glu-418.

The protein belongs to the class-II aminoacyl-tRNA synthetase family. Homodimer. Requires Mg(2+) as cofactor.

The protein localises to the cytoplasm. The enzyme catalyses tRNA(Lys) + L-lysine + ATP = L-lysyl-tRNA(Lys) + AMP + diphosphate. This chain is Lysine--tRNA ligase, found in Clostridium botulinum (strain Okra / Type B1).